A 112-amino-acid chain; its full sequence is ATP-dependent Clp protease adapter protein ClpS (112 aa).

Belongs to the ClpS family. Binds to the N-terminal domain of the chaperone ClpA.

Involved in the modulation of the specificity of the ClpAP-mediated ATP-dependent protein degradation. This is ATP-dependent Clp protease adapter protein ClpS from Rhodococcus jostii (strain RHA1).